The sequence spans 314 residues: MATELDKIFLILEIAEFIIGMLGNVFIGLVNCSEGIKNQKVFSADFILTCLAISTIGQLFVILFDSFLVGLASHLYTTYRLGKPVIMLWHMTNHLTTWLATCLSIFYFFKIAHFPHSLFLWLRWRMNGMIVMLLILSLFLLIFDSLVLEIFIDISLNIIDKSNLTLYLDESKTLYDKLSILKTLLSLTSFIPFSLSLTSLLFFFLSLVRHTRNLKLSSLGSRDSSTEAHRRAMKMVMSFLFLFIVHFFSLQVANWIFFMLWNNKYIKFAMLALNAFPSCHSFILILGNSKLRQTAVRLLWHLRNYTKTPNALPL.

The Extracellular portion of the chain corresponds to 1–7 (MATELDK). Residues 8–28 (IFLILEIAEFIIGMLGNVFIG) traverse the membrane as a helical segment. Over 29-50 (LVNCSEGIKNQKVFSADFILTC) the chain is Cytoplasmic. Residues 51 to 71 (LAISTIGQLFVILFDSFLVGL) form a helical membrane-spanning segment. At 72–101 (ASHLYTTYRLGKPVIMLWHMTNHLTTWLAT) the chain is on the extracellular side. A helical membrane pass occupies residues 102-122 (CLSIFYFFKIAHFPHSLFLWL). Residues 123–127 (RWRMN) are Cytoplasmic-facing. A helical membrane pass occupies residues 128–148 (GMIVMLLILSLFLLIFDSLVL). Residues 149–187 (EIFIDISLNIIDKSNLTLYLDESKTLYDKLSILKTLLSL) lie on the Extracellular side of the membrane. N-linked (GlcNAc...) asparagine glycosylation occurs at Asn163. The chain crosses the membrane as a helical span at residues 188–208 (TSFIPFSLSLTSLLFFFLSLV). Residues 209–238 (RHTRNLKLSSLGSRDSSTEAHRRAMKMVMS) are Cytoplasmic-facing. A helical membrane pass occupies residues 239-259 (FLFLFIVHFFSLQVANWIFFM). Residues 260 to 265 (LWNNKY) lie on the Extracellular side of the membrane. A helical transmembrane segment spans residues 266-286 (IKFAMLALNAFPSCHSFILIL). At 287–314 (GNSKLRQTAVRLLWHLRNYTKTPNALPL) the chain is on the cytoplasmic side.

This sequence belongs to the G-protein coupled receptor T2R family.

It localises to the membrane. Its function is as follows. Receptor that may play a role in the perception of bitterness and is gustducin-linked. May play a role in sensing the chemical composition of the gastrointestinal content. The activity of this receptor may stimulate alpha gustducin, mediate PLC-beta-2 activation and lead to the gating of TRPM5. This Pan paniscus (Pygmy chimpanzee) protein is Taste receptor type 2 member 42 (TAS2R42).